The sequence spans 423 residues: Carboxypeptidase B2 (423 aa).

An N-terminal signal peptide occupies residues 1–22 (MKLYSLGVLVATVLFCGEHAFA). Residues 23–114 (FQRGQVLSAL…QTSNDTISPR (92 aa)) constitute a propeptide, activation peptide. 4 N-linked (GlcNAc...) asparagine glycosylation sites follow: asparagine 44, asparagine 73, asparagine 85, and asparagine 108. The Peptidase M14 domain maps to 122–419 (QYHSLNEIYS…VAVAKIASHV (298 aa)). Cysteine 178 and cysteine 191 are joined by a disulfide. Zn(2+) is bound by residues histidine 181 and glutamate 184. Residues 181–184 (HARE) and arginine 239 each bind substrate. Asparagine 241 carries N-linked (GlcNAc...) asparagine glycosylation. 2 disulfide bridges follow: cysteine 250–cysteine 274 and cysteine 265–cysteine 279. A substrate-binding site is contributed by 256-257 (NR). A Zn(2+)-binding site is contributed by histidine 310. Residues 311 to 312 (SY) and tyrosine 363 each bind substrate. Glutamate 385 (proton donor/acceptor) is an active-site residue.

The protein belongs to the peptidase M14 family. The cofactor is Zn(2+).

The protein resides in the secreted. It catalyses the reaction Release of C-terminal Arg and Lys from a polypeptide.. TAFI/CPB2 is unique among carboxypeptidases in that it spontaneously inactivates with a short half-life, a property that is crucial for its role in controlling blood clot lysis. The zymogen is stabilized by interactions with the activation peptide. Release of the activation peptide increases a dynamic flap mobility and in time this leads to conformational changes that disrupt the catalytic site and expose a cryptic thrombin-cleavage site present at Arg-324. In terms of biological role, cleaves C-terminal arginine or lysine residues from biologically active peptides such as kinins or anaphylatoxins in the circulation thereby regulating their activities. Down-regulates fibrinolysis by removing C-terminal lysine residues from fibrin that has already been partially degraded by plasmin. This is Carboxypeptidase B2 (CPB2) from Bos taurus (Bovine).